Consider the following 434-residue polypeptide: UDP-N-acetylglucosamine 1-carboxyvinyltransferase (434 aa).

Residue 22-23 participates in phosphoenolpyruvate binding; that stretch reads KN. Residue R97 coordinates UDP-N-acetyl-alpha-D-glucosamine. D121 serves as the catalytic Proton donor. Residues D319 and M341 each coordinate UDP-N-acetyl-alpha-D-glucosamine.

The protein belongs to the EPSP synthase family. MurA subfamily.

It is found in the cytoplasm. The catalysed reaction is phosphoenolpyruvate + UDP-N-acetyl-alpha-D-glucosamine = UDP-N-acetyl-3-O-(1-carboxyvinyl)-alpha-D-glucosamine + phosphate. It functions in the pathway cell wall biogenesis; peptidoglycan biosynthesis. Its function is as follows. Cell wall formation. Adds enolpyruvyl to UDP-N-acetylglucosamine. This is UDP-N-acetylglucosamine 1-carboxyvinyltransferase from Porphyromonas gingivalis (strain ATCC BAA-308 / W83).